A 525-amino-acid chain; its full sequence is Membrane-bound lytic murein transglycosylase F (525 aa).

A signal peptide spans 1–24 (MQIRHFNRLKRSVLLFASVLLLSA). Positions 25–284 (CQIESQPKSE…SLEEKYIGHI (260 aa)) are non-LT domain. Residues 286-525 (AFDYVDTRAF…VDEDLDQEEE (240 aa)) form an LT domain region. E329 is an active-site residue. Positions 506-525 (VSGASDITNEVDEDLDQEEE) are disordered. A compositionally biased stretch (acidic residues) spans 514-525 (NEVDEDLDQEEE).

The protein in the N-terminal section; belongs to the bacterial solute-binding protein 3 family. It in the C-terminal section; belongs to the transglycosylase Slt family.

Its subcellular location is the cell outer membrane. It carries out the reaction Exolytic cleavage of the (1-&gt;4)-beta-glycosidic linkage between N-acetylmuramic acid (MurNAc) and N-acetylglucosamine (GlcNAc) residues in peptidoglycan, from either the reducing or the non-reducing ends of the peptidoglycan chains, with concomitant formation of a 1,6-anhydrobond in the MurNAc residue.. In terms of biological role, murein-degrading enzyme that degrades murein glycan strands and insoluble, high-molecular weight murein sacculi, with the concomitant formation of a 1,6-anhydromuramoyl product. Lytic transglycosylases (LTs) play an integral role in the metabolism of the peptidoglycan (PG) sacculus. Their lytic action creates space within the PG sacculus to allow for its expansion as well as for the insertion of various structures such as secretion systems and flagella. This is Membrane-bound lytic murein transglycosylase F from Vibrio parahaemolyticus serotype O3:K6 (strain RIMD 2210633).